Here is a 225-residue protein sequence, read N- to C-terminus: Lipoprotein-releasing system ATP-binding protein LolD (225 aa).

The ABC transporter domain maps to L5–D225. G41–S48 serves as a coordination point for ATP.

Belongs to the ABC transporter superfamily. Lipoprotein translocase (TC 3.A.1.125) family. In terms of assembly, the complex is composed of two ATP-binding proteins (LolD) and two transmembrane proteins (LolC and LolE).

Its subcellular location is the cell inner membrane. Part of the ABC transporter complex LolCDE involved in the translocation of mature outer membrane-directed lipoproteins, from the inner membrane to the periplasmic chaperone, LolA. Responsible for the formation of the LolA-lipoprotein complex in an ATP-dependent manner. In Geobacter metallireducens (strain ATCC 53774 / DSM 7210 / GS-15), this protein is Lipoprotein-releasing system ATP-binding protein LolD.